A 276-amino-acid polypeptide reads, in one-letter code: Diaminopimelate epimerase (276 aa).

Substrate contacts are provided by Asn-13, Gln-46, and Asn-66. The active-site Proton donor is the Cys-75. Residues 76 to 77 (GN), Asn-159, Asn-192, and 210 to 211 (ER) contribute to the substrate site. Residue Cys-219 is the Proton acceptor of the active site. 220 to 221 (GT) contacts substrate.

It belongs to the diaminopimelate epimerase family. In terms of assembly, homodimer.

The protein localises to the cytoplasm. The catalysed reaction is (2S,6S)-2,6-diaminopimelate = meso-2,6-diaminopimelate. The protein operates within amino-acid biosynthesis; L-lysine biosynthesis via DAP pathway; DL-2,6-diaminopimelate from LL-2,6-diaminopimelate: step 1/1. Its function is as follows. Catalyzes the stereoinversion of LL-2,6-diaminopimelate (L,L-DAP) to meso-diaminopimelate (meso-DAP), a precursor of L-lysine and an essential component of the bacterial peptidoglycan. The polypeptide is Diaminopimelate epimerase (Azotobacter vinelandii (strain DJ / ATCC BAA-1303)).